Here is a 38-residue protein sequence, read N- to C-terminus: Large ribosomal subunit protein bL36 (38 aa).

This sequence belongs to the bacterial ribosomal protein bL36 family.

In Flavobacterium psychrophilum (strain ATCC 49511 / DSM 21280 / CIP 103535 / JIP02/86), this protein is Large ribosomal subunit protein bL36.